A 234-amino-acid polypeptide reads, in one-letter code: Small ribosomal subunit protein uS3 (234 aa).

Residues 39 to 107 (IRKMLKERLK…EVHLNLVEVR (69 aa)) enclose the KH type-2 domain. The span at 215–227 (QERRLQESGEQRA) shows a compositional bias: basic and acidic residues. Residues 215–234 (QERRLQESGEQRARSGRQAA) are disordered.

This sequence belongs to the universal ribosomal protein uS3 family. As to quaternary structure, part of the 30S ribosomal subunit. Forms a tight complex with proteins S10 and S14.

Its function is as follows. Binds the lower part of the 30S subunit head. Binds mRNA in the 70S ribosome, positioning it for translation. The sequence is that of Small ribosomal subunit protein uS3 from Maricaulis maris (strain MCS10) (Caulobacter maris).